Reading from the N-terminus, the 394-residue chain is Elongation factor Tu (394 aa).

Positions lysine 10 to glutamate 204 constitute a tr-type G domain. The tract at residues glycine 19 to threonine 26 is G1. GTP is bound at residue glycine 19–threonine 26. Residue threonine 26 coordinates Mg(2+). A G2 region spans residues glycine 60 to asparagine 64. The G3 stretch occupies residues aspartate 81 to glycine 84. Residues aspartate 81–histidine 85 and asparagine 136–aspartate 139 contribute to the GTP site. The G4 stretch occupies residues asparagine 136–aspartate 139. Positions serine 174–leucine 176 are G5.

It belongs to the TRAFAC class translation factor GTPase superfamily. Classic translation factor GTPase family. EF-Tu/EF-1A subfamily. As to quaternary structure, monomer.

The protein localises to the cytoplasm. The catalysed reaction is GTP + H2O = GDP + phosphate + H(+). In terms of biological role, GTP hydrolase that promotes the GTP-dependent binding of aminoacyl-tRNA to the A-site of ribosomes during protein biosynthesis. The chain is Elongation factor Tu from Shewanella halifaxensis (strain HAW-EB4).